A 161-amino-acid polypeptide reads, in one-letter code: SsrA-binding protein (161 aa).

Residues 140–161 (KRESIKERDWKRDKQRLLKDRG) form a disordered region.

Belongs to the SmpB family.

Its subcellular location is the cytoplasm. Its function is as follows. Required for rescue of stalled ribosomes mediated by trans-translation. Binds to transfer-messenger RNA (tmRNA), required for stable association of tmRNA with ribosomes. tmRNA and SmpB together mimic tRNA shape, replacing the anticodon stem-loop with SmpB. tmRNA is encoded by the ssrA gene; the 2 termini fold to resemble tRNA(Ala) and it encodes a 'tag peptide', a short internal open reading frame. During trans-translation Ala-aminoacylated tmRNA acts like a tRNA, entering the A-site of stalled ribosomes, displacing the stalled mRNA. The ribosome then switches to translate the ORF on the tmRNA; the nascent peptide is terminated with the 'tag peptide' encoded by the tmRNA and targeted for degradation. The ribosome is freed to recommence translation, which seems to be the essential function of trans-translation. This chain is SsrA-binding protein, found in Sphingopyxis alaskensis (strain DSM 13593 / LMG 18877 / RB2256) (Sphingomonas alaskensis).